A 334-amino-acid polypeptide reads, in one-letter code: MSPSFKSTAILGAVALAARVRAHGYVSGIVVDGAYHGGYIVDKYPYMPNPPDVVGWSTTATDLGFVAPDAFGDPDIICHRDGAPGAIHAKVNAGATIELQWNTWPESHHGPVIDYLANCNGDCSSVDKTSLKFFKISEAGLNDGSNAPGQWASDDLIANNNSWTVTIPKSIAPGNYVLRHEIIALHSAGNQNGAQNYPQCFNLEITSNGSDNPEGVLGTELYKADDPGILFNIYQPMDSYPIPGPALYTGGSSPSPNPPTSTQSPVPQPTQSPPSGSNPGNGNGDDDNDNGNETPSPSLPVEIPDDLTSRELLLVAQEIIARLLELQNQLVVSN.

The first 22 residues, 1 to 22 (MSPSFKSTAILGAVALAARVRA), serve as a signal peptide directing secretion. Residues histidine 23 and histidine 108 each coordinate Cu(2+). Disulfide bonds link cysteine 78-cysteine 200 and cysteine 119-cysteine 123. N-linked (GlcNAc...) asparagine glycosylation occurs at asparagine 160. The O2 site is built by histidine 186 and glutamine 195. A Cu(2+)-binding site is contributed by tyrosine 197. N-linked (GlcNAc...) asparagine glycosylation is present at asparagine 208. A disordered region spans residues 244 to 304 (GPALYTGGSS…PSPSLPVEIP (61 aa)). Low complexity predominate over residues 249 to 265 (TGGSSPSPNPPTSTQSP).

The protein belongs to the polysaccharide monooxygenase AA9 family. The cofactor is Cu(2+).

Its subcellular location is the secreted. It carries out the reaction [(1-&gt;4)-beta-D-glucosyl]n+m + reduced acceptor + O2 = 4-dehydro-beta-D-glucosyl-[(1-&gt;4)-beta-D-glucosyl]n-1 + [(1-&gt;4)-beta-D-glucosyl]m + acceptor + H2O.. Lytic polysaccharide monooxygenase (LPMO) that depolymerizes crystalline and amorphous polysaccharides via the oxidation of scissile alpha- or beta-(1-4)-glycosidic bonds, yielding C1 or C4 oxidation products. Catalysis by LPMOs requires the reduction of the active-site copper from Cu(II) to Cu(I) by a reducing agent and H(2)O(2) or O(2) as a cosubstrate. Active on hemicelluloses, including xylan, glucomannan, and xyloglucan. Shows clear activity on cellooligosaccharides, generating C4 oxidation products. Also displays activity on konjac glucomannan (KGM), a linear beta-1,4-linked mannan with randomly distributed glucosyl residues; as well as trace activity on lichenan, a linear beta-1,3-beta-1,4-glucan with a 1:2 ratio of beta-1,3 to beta-1,4 linkages. Has no activity on ivory nut mannan (INM), a linear beta-1,4-linked mannan without substitutions. This Malbranchea cinnamomea (Thermophilic fungus) protein is AA9 family lytic polysaccharide monooxygenase A.